The chain runs to 131 residues: Small ribosomal subunit protein eS6 (131 aa).

The segment at Ala-76 to Gly-95 is disordered. Over residues Lys-81–Val-93 the composition is skewed to basic residues.

The protein belongs to the eukaryotic ribosomal protein eS6 family.

The polypeptide is Small ribosomal subunit protein eS6 (Methanocaldococcus jannaschii (strain ATCC 43067 / DSM 2661 / JAL-1 / JCM 10045 / NBRC 100440) (Methanococcus jannaschii)).